A 116-amino-acid polypeptide reads, in one-letter code: CDKN2AIP N-terminal-like protein (116 aa).

At Met1 the chain carries N-acetylmethionine. Positions 24–116 (AEQFRSYSES…RSELMKKHQS (93 aa)) constitute an XRN2-binding (XTBD) domain.

This sequence belongs to the CARF family. In terms of assembly, interacts with XRN2; the interaction is direct.

This Homo sapiens (Human) protein is CDKN2AIP N-terminal-like protein (CDKN2AIPNL).